Here is a 136-residue protein sequence, read N- to C-terminus: Small ribosomal subunit protein uS9 (136 aa).

The segment at 97–136 (SPDNRKPLKTEGHLSRDPRAKERRKYGLKKARKAPQFSKR) is disordered. A compositionally biased stretch (basic and acidic residues) spans 98 to 116 (PDNRKPLKTEGHLSRDPRA). The span at 117 to 136 (KERRKYGLKKARKAPQFSKR) shows a compositional bias: basic residues.

Belongs to the universal ribosomal protein uS9 family.

This Prochlorococcus marinus (strain MIT 9301) protein is Small ribosomal subunit protein uS9.